Consider the following 352-residue polypeptide: B1 bradykinin receptor (352 aa).

Residues 1-41 lie on the Extracellular side of the membrane; that stretch reads MASWPPLELQSSNQSQLFPQNATACDNAPEAWDLLHRVLPT. 2 N-linked (GlcNAc...) asparagine glycosylation sites follow: N13 and N21. A helical transmembrane segment spans residues 42–62; the sequence is FIISICSFGLLGNLFVLLVFL. The Cytoplasmic segment spans residues 63 to 72; it reads LPRRRLNVAE. The chain crosses the membrane as a helical span at residues 73–93; that stretch reads IYLANLAASDLVFVLGLPFWA. Topologically, residues 94–110 are extracellular; that stretch reads ENIWNQFNWPFGALLCR. C109 and C188 are oxidised to a cystine. A helical membrane pass occupies residues 111-131; that stretch reads GINGVIKANLFISIFLVVAIS. Topologically, residues 132–153 are cytoplasmic; the sequence is QDRYCLLVHPMASRRRQRRRQA. The helical transmembrane segment at 154–174 threads the bilayer; sequence RVTCVLIWVVGGLLSIPTFLL. Residues 175–206 lie on the Extracellular side of the membrane; the sequence is RSIQAVPDLNITACILLLPHEAWHFARIVELN. N-linked (GlcNAc...) asparagine glycosylation occurs at N184. A helical membrane pass occupies residues 207-227; it reads ILAFLLPLAAIVFFNYHILAS. Residues 228-250 are Cytoplasmic-facing; the sequence is LRGREEVSRTRCGGRKDSKTTAL. Residues 251 to 271 form a helical membrane-spanning segment; it reads ILTLVVAFLVCWAPYHFFAFL. Over 272–294 the chain is Extracellular; that stretch reads EFLFQVQAIRSCFWEDFIDLGLQ. The chain crosses the membrane as a helical span at residues 295-315; that stretch reads LANFLAFTNSSLNPVIYVFVG. Topologically, residues 316–352 are cytoplasmic; it reads RLFRTKVWELYKQCTPKSLAPISSSHRKEIFQLFWRN. C329 carries S-palmitoyl cysteine lipidation.

The protein belongs to the G-protein coupled receptor 1 family. Bradykinin receptor subfamily. BDKRB1 sub-subfamily.

Its subcellular location is the cell membrane. Its function is as follows. This is a receptor for bradykinin. Could be a factor in chronic pain and inflammation. The sequence is that of B1 bradykinin receptor (BDKRB1) from Chlorocebus pygerythrus (Vervet monkey).